A 579-amino-acid chain; its full sequence is Glypican-2 (579 aa).

Residues M1–G21 form the signal peptide. Residues S55, S92, and S155 are each glycosylated (O-linked (Xyl...) (heparan sulfate) serine). Disordered regions lie at residues G347 to A382 and A483 to R552. The segment covering A361 to P379 has biased composition (basic and acidic residues). O-linked (Xyl...) (heparan sulfate) serine glycosylation is found at S498 and S500. A compositionally biased stretch (pro residues) spans V517 to P527. S556 is lipidated: GPI-anchor amidated serine. Residues S557–R579 constitute a propeptide, removed in mature form.

Belongs to the glypican family. As to quaternary structure, interacts (via heparan sulfate) with PTN; this interaction promotes neurite outgrowth through binding of PTN with chondroitin sulfate of proteoglycans, thereby releasing PTPRS of chondroitin sulfate proteoglycans (CSPGs) and leading to binding with heparan sulfate of GPC2. Interacts (heparan sulfate chain) with MDK; this interaction is inhibited by heparin followed by chondroitin sulfate E; this interaction induces GPC2 clustering through heparan sulfate chain; this interaction induces neuronal cell adhesion and neurite outgrowth.

It localises to the cell membrane. The protein localises to the secreted. It is found in the extracellular space. In terms of biological role, cell surface proteoglycan that bears heparan sulfate. May fulfill a function related to the motile behaviors of developing neurons. The polypeptide is Glypican-2 (Gpc2) (Mus musculus (Mouse)).